The primary structure comprises 115 residues: Large ribosomal subunit protein bL20 (115 aa).

This sequence belongs to the bacterial ribosomal protein bL20 family.

In terms of biological role, binds directly to 23S ribosomal RNA and is necessary for the in vitro assembly process of the 50S ribosomal subunit. It is not involved in the protein synthesizing functions of that subunit. This Synechococcus sp. (strain CC9605) protein is Large ribosomal subunit protein bL20.